Reading from the N-terminus, the 75-residue chain is Sec-independent protein translocase protein TatA (75 aa).

Residues 1–21 form a helical membrane-spanning segment; that stretch reads MGGFSIWHWLIVLVIVLLVFG. Residues 41 to 75 are disordered; it reads KGMHDDDKPAGKLGDDSRTAEQAREAQAERDRDAR.

The protein belongs to the TatA/E family. In terms of assembly, the Tat system comprises two distinct complexes: a TatABC complex, containing multiple copies of TatA, TatB and TatC subunits, and a separate TatA complex, containing only TatA subunits. Substrates initially bind to the TatABC complex, which probably triggers association of the separate TatA complex to form the active translocon.

It is found in the cell inner membrane. Part of the twin-arginine translocation (Tat) system that transports large folded proteins containing a characteristic twin-arginine motif in their signal peptide across membranes. TatA could form the protein-conducting channel of the Tat system. The polypeptide is Sec-independent protein translocase protein TatA (Xanthomonas axonopodis pv. citri (strain 306)).